Reading from the N-terminus, the 415-residue chain is MLQNTGKLAGCTIFITGASRGIGKAIALKAAQDGANVVIAAKTADPHPKLPGTIYTAAAEIEAAGGKALPCIVDVRDEKQINDAVEQAVEKFGGIDILVNNASAINLTGTLQTPMKKADLMLGINLRGTYLTSKLCIPHLLKSKNPHILNLSPPLNLNPIWFKNHTAYTIAKYGMSMCVLGMAEEFRGSIAVNALWPKTAIQTAAMDMLGGSEVGKQCRKVEIMADAAYAIFKQPTSFTGQFVIDEDILKKEGIKDFDVYAVEPGHPLLPDFFLDGQPEDLVKHMEAHGATPAFTTAKADPVAAGPVSEMFNTIRGIISPEMVKTTQGVYKFNLAGEHAGVWYLDLKNDAGSAGNGEPPVKADVVMSMDSEDFVKMFGGKLKPTMAFMSGKLTIKGDMGLAIKLEKMMAMMKSKL.

Residues 17 to 23 (GASRGIG), K42, and D74 contribute to the NADP(+) site. Y168 serves as the catalytic Proton acceptor. Residue K172 coordinates NADP(+). In terms of domain architecture, SCP2 spans 304–412 (AGPVSEMFNT…KLEKMMAMMK (109 aa)).

Belongs to the short-chain dehydrogenases/reductases (SDR) family.

The protein localises to the peroxisome. Its subcellular location is the mitochondrion. In terms of biological role, has apparently no steroid dehydrogenase activity. Might act as a metabolic regulator that affects systemic adaptation to nutritional cues. The polypeptide is Hydroxysteroid dehydrogenase-like protein 2 (hsdl2) (Danio rerio (Zebrafish)).